The primary structure comprises 206 residues: Insecticyanin-B (206 aa).

Positions 1 to 17 (MQRFLVFTIVAVATAAA) are cleaved as a signal peptide. 2 cysteine pairs are disulfide-bonded: cysteine 26/cysteine 136 and cysteine 60/cysteine 192.

This sequence belongs to the calycin superfamily. Lipocalin family. Homotetramer. Synthesized only in the caterpillars, apparently by the epidermis and secreted into the hemolymph. The protein is passed over from the larval hemolymph to that of pupae and adults and is sequestered in the eggs.

Its subcellular location is the secreted. This protein binds a chromophore: biliverdin IX, isomer gamma. Mixed with lipoprotein-bound carotenes, this blue protein provides hornworms with their green cryptic coloration which serves a camouflage. The sequence is that of Insecticyanin-B (INSB) from Manduca sexta (Tobacco hawkmoth).